Here is a 97-residue protein sequence, read N- to C-terminus: Co-chaperonin GroES (97 aa).

It belongs to the GroES chaperonin family. In terms of assembly, heptamer of 7 subunits arranged in a ring. Interacts with the chaperonin GroEL.

The protein localises to the cytoplasm. Together with the chaperonin GroEL, plays an essential role in assisting protein folding. The GroEL-GroES system forms a nano-cage that allows encapsulation of the non-native substrate proteins and provides a physical environment optimized to promote and accelerate protein folding. GroES binds to the apical surface of the GroEL ring, thereby capping the opening of the GroEL channel. This is Co-chaperonin GroES from Aeromonas salmonicida (strain A449).